The sequence spans 725 residues: Glutamine-dependent NAD(+) synthetase (725 aa).

A CN hydrolase domain is found at 5-275 (VTVATCALNQ…VEVLTATLDL (271 aa)). E45 (proton acceptor; for glutaminase activity) is an active-site residue. Catalysis depends on K114, which acts as the For glutaminase activity. The active-site Nucleophile; for glutaminase activity is the C175. The tract at residues 325-706 (YHRPEEEISL…KTSQTLEEQI (382 aa)) is ligase. ATP is bound at residue 355 to 362 (PLSGGVDS). S357 is a catalytic residue.

This sequence in the C-terminal section; belongs to the NAD synthetase family. As to quaternary structure, homohexamer.

It carries out the reaction deamido-NAD(+) + L-glutamine + ATP + H2O = L-glutamate + AMP + diphosphate + NAD(+) + H(+). The protein operates within cofactor biosynthesis; NAD(+) biosynthesis; NAD(+) from deamido-NAD(+) (L-Gln route): step 1/1. Functionally, catalyzes the final step of the nicotinamide adenine dinucleotide (NAD) de novo synthesis pathway, the ATP-dependent amidation of deamido-NAD using L-glutamine as a nitrogen source. The sequence is that of Glutamine-dependent NAD(+) synthetase (Nadsyn1) from Rattus norvegicus (Rat).